The chain runs to 156 residues: Small ribosomal subunit protein uS7 (156 aa).

Belongs to the universal ribosomal protein uS7 family. Part of the 30S ribosomal subunit. Contacts proteins S9 and S11.

Functionally, one of the primary rRNA binding proteins, it binds directly to 16S rRNA where it nucleates assembly of the head domain of the 30S subunit. Is located at the subunit interface close to the decoding center, probably blocks exit of the E-site tRNA. This chain is Small ribosomal subunit protein uS7, found in Rhizobium meliloti (strain 1021) (Ensifer meliloti).